Reading from the N-terminus, the 1506-residue chain is DDB1- and CUL4-associated factor 1 (1506 aa).

A protein kinase-like region spans residues 141 to 499; the sequence is QPLRTYSTGL…STLEILNLED (359 aa). Phosphoserine occurs at positions 202 and 254. The segment at 241 to 275 is disordered; the sequence is RLDSSHKTSSRVNSATKPEEGGLKKNKSAKHGDRE. In terms of domain architecture, Chromo spans 561-592; sequence SYTHEQIVEMMEFLIEYGPAQLYWEPAEVFLK. Lys700 carries the post-translational modification N6-acetyllysine. The residue at position 827 (Ser827) is a Phosphoserine. In terms of domain architecture, LisH spans 845–877; that stretch reads PEKELLLLIRNHLISKGLGETATVLTREADLPM. Position 887 is a phosphothreonine (Thr887). Phosphoserine is present on residues Ser894 and Ser897. Disordered stretches follow at residues 916–946 and 977–999; these read ATVG…GPSY and KSDH…HLPS. The span at 924–943 shows a compositional bias: pro residues; that stretch reads SAPPAHPPPRPPQGSLPLPG. Residues Ser978 and Ser999 each carry the phosphoserine modification. 5 WD repeats span residues 1090-1129, 1132-1173, 1175-1212, 1214-1246, and 1247-1289; these read EDES…EEAS, CHNS…DMKH, FTED…KLLT, FNPD…WDVR, and SAQA…LLHT. Positions 1090–1289 are WD repeat-like region; that stretch reads EDESGFTCCA…DLRTFHLLHT (200 aa). 2 short sequence motifs (DWD box) span residues 1241 to 1248 and 1277 to 1284; these read VLWDVRSA and EIWDLRTF. Ser1327 is modified (phosphoserine). The segment at 1392-1506 is disordered; sequence RLAEDEDEEE…EDDIILSLNE (115 aa). 2 stretches are compositionally biased toward acidic residues: residues 1395-1482 and 1489-1500; these read EDED…EEVE and DSSDNSDLEDDI. Residues 1417–1506 are interaction with NF2; it reads DDDTDDLDEL…EDDIILSLNE (90 aa).

Belongs to the VPRBP/DCAF1 family. Component of the DCX (DDB1-CUL4-X-box) E3 ubiquitin-protein ligase complex, named CUL4A-RBX1-DDB1-DCAF1/VPRBP complex. Interacts with DDB1; the interaction is direct. Also forms a ternary complex with DDA1 and DDB1. Interacts with NF2 (via FERM domain). Component of the EDVP complex, a E3 ligase complex containing DYRK2, EDD/UBR5, DDB1 and DCAF1. Interacts with DYRK2; the interaction is direct. Interacts with RAG1; the interaction is direct. Interacts with LLGL1 and LLGL2. Interacts with histone H3. Interacts with ESR1 and LATS1; probably recruited by LATS1 to promote ESR1 ubiquitination and ubiquitin-mediated proteasomal degradation. Directly interacts with TET1, TET2 and TET3 (via C-terminus). Interacts with CEP78; promoting DCAF1 localization to centrosomes. In terms of tissue distribution, widely expressed. Expressed in oocytes and zygotes (at protein level).

It is found in the cytoplasm. The protein resides in the nucleus. Its subcellular location is the cytoskeleton. It localises to the microtubule organizing center. The protein localises to the centrosome. It carries out the reaction L-seryl-[protein] + ATP = O-phospho-L-seryl-[protein] + ADP + H(+). It catalyses the reaction L-threonyl-[protein] + ATP = O-phospho-L-threonyl-[protein] + ADP + H(+). It functions in the pathway protein modification; protein ubiquitination. Functionally, acts both as a substrate recognition component of E3 ubiquitin-protein ligase complexes and as an atypical serine/threonine-protein kinase, playing key roles in various processes such as cell cycle, telomerase regulation and histone modification. Probable substrate-specific adapter of a DCX (DDB1-CUL4-X-box) E3 ubiquitin-protein ligase complex, named CUL4A-RBX1-DDB1-DCAF1/VPRBP complex, which mediates ubiquitination and proteasome-dependent degradation of proteins such as NF2. Involved in the turnover of methylated proteins: recognizes and binds methylated proteins via its chromo domain, leading to ubiquitination of target proteins by the RBX1-DDB1-DCAF1/VPRBP complex. The CUL4A-RBX1-DDB1-DCAF1/VPRBP complex is also involved in B-cell development: DCAF1 is recruited by RAG1 to ubiquitinate proteins, leading to limit error-prone repair during V(D)J recombination. Also part of the EDVP complex, an E3 ligase complex that mediates ubiquitination of proteins such as TERT, leading to TERT degradation and telomerase inhibition. The EDVP complex also mediates ubiquitination and degradation of CCP110. Also acts as an atypical serine/threonine-protein kinase that specifically mediates phosphorylation of 'Thr-120' of histone H2A (H2AT120ph) in a nucleosomal context, thereby repressing transcription. H2AT120ph is present in the regulatory region of many tumor suppresor genes, down-regulates their transcription and is present at high level in a number of tumors. Involved in JNK-mediated apoptosis during cell competition process via its interaction with LLGL1 and LLGL2. By acting on TET dioxygenses, essential for oocyte maintenance at the primordial follicle stage, hence essential for female fertility. The chain is DDB1- and CUL4-associated factor 1 from Mus musculus (Mouse).